Reading from the N-terminus, the 427-residue chain is Enolase (427 aa).

Gln-163 lines the (2R)-2-phosphoglycerate pocket. The active-site Proton donor is Glu-205. 3 residues coordinate Mg(2+): Asp-242, Glu-285, and Asp-312. Residues Lys-337, Arg-366, Ser-367, and Lys-388 each contribute to the (2R)-2-phosphoglycerate site. Residue Lys-337 is the Proton acceptor of the active site.

This sequence belongs to the enolase family. Mg(2+) serves as cofactor.

It is found in the cytoplasm. The protein resides in the secreted. The protein localises to the cell surface. It carries out the reaction (2R)-2-phosphoglycerate = phosphoenolpyruvate + H2O. Its pathway is carbohydrate degradation; glycolysis; pyruvate from D-glyceraldehyde 3-phosphate: step 4/5. Its function is as follows. Catalyzes the reversible conversion of 2-phosphoglycerate (2-PG) into phosphoenolpyruvate (PEP). It is essential for the degradation of carbohydrates via glycolysis. The protein is Enolase of Paraburkholderia phytofirmans (strain DSM 17436 / LMG 22146 / PsJN) (Burkholderia phytofirmans).